A 455-amino-acid chain; its full sequence is Bifunctional protein GlmU (455 aa).

The pyrophosphorylase stretch occupies residues 1–226; that stretch reads MSLDIVILAA…AMEVQGANDR (226 aa). UDP-N-acetyl-alpha-D-glucosamine-binding positions include 8-11, lysine 22, glutamine 73, 78-79, 99-101, glycine 136, glutamate 151, asparagine 166, and asparagine 224; these read LAAG, GT, and YGD. Aspartate 101 contacts Mg(2+). Residue asparagine 224 coordinates Mg(2+). The linker stretch occupies residues 227 to 247; that stretch reads KQLSELERHYQLREARRLMAA. Residues 248–455 are N-acetyltransferase; it reads GVTLRDPSRF…WKRPVKITKD (208 aa). Residues arginine 330 and lysine 348 each coordinate UDP-N-acetyl-alpha-D-glucosamine. The Proton acceptor role is filled by histidine 360. UDP-N-acetyl-alpha-D-glucosamine is bound by residues tyrosine 363 and asparagine 374. Acetyl-CoA is bound by residues alanine 377, 383–384, serine 402, alanine 420, and arginine 437; that span reads NY.

This sequence in the N-terminal section; belongs to the N-acetylglucosamine-1-phosphate uridyltransferase family. It in the C-terminal section; belongs to the transferase hexapeptide repeat family. As to quaternary structure, homotrimer. Requires Mg(2+) as cofactor.

The protein localises to the cytoplasm. The enzyme catalyses alpha-D-glucosamine 1-phosphate + acetyl-CoA = N-acetyl-alpha-D-glucosamine 1-phosphate + CoA + H(+). It carries out the reaction N-acetyl-alpha-D-glucosamine 1-phosphate + UTP + H(+) = UDP-N-acetyl-alpha-D-glucosamine + diphosphate. It participates in nucleotide-sugar biosynthesis; UDP-N-acetyl-alpha-D-glucosamine biosynthesis; N-acetyl-alpha-D-glucosamine 1-phosphate from alpha-D-glucosamine 6-phosphate (route II): step 2/2. It functions in the pathway nucleotide-sugar biosynthesis; UDP-N-acetyl-alpha-D-glucosamine biosynthesis; UDP-N-acetyl-alpha-D-glucosamine from N-acetyl-alpha-D-glucosamine 1-phosphate: step 1/1. Its pathway is bacterial outer membrane biogenesis; LPS lipid A biosynthesis. In terms of biological role, catalyzes the last two sequential reactions in the de novo biosynthetic pathway for UDP-N-acetylglucosamine (UDP-GlcNAc). The C-terminal domain catalyzes the transfer of acetyl group from acetyl coenzyme A to glucosamine-1-phosphate (GlcN-1-P) to produce N-acetylglucosamine-1-phosphate (GlcNAc-1-P), which is converted into UDP-GlcNAc by the transfer of uridine 5-monophosphate (from uridine 5-triphosphate), a reaction catalyzed by the N-terminal domain. This is Bifunctional protein GlmU from Pseudomonas syringae pv. tomato (strain ATCC BAA-871 / DC3000).